We begin with the raw amino-acid sequence, 166 residues long: MRILGLDPGLRNTGWGIIDAVDNRLRHVADGVIRPDASAALAERLVQLHDGIMAVIADFSPDEAAVEETFVNMNPASTLKLGQARGVVLLVPAKSGLPVGEYAATLVKQSVVGTGRAAKEQVGMMVKTLLPGCLAATADAADALAVAICHAHHRGTQQKLARAVAR.

Catalysis depends on residues D7, E67, and D139. Residues D7, E67, and D139 each contribute to the Mg(2+) site.

The protein belongs to the RuvC family. As to quaternary structure, homodimer which binds Holliday junction (HJ) DNA. The HJ becomes 2-fold symmetrical on binding to RuvC with unstacked arms; it has a different conformation from HJ DNA in complex with RuvA. In the full resolvosome a probable DNA-RuvA(4)-RuvB(12)-RuvC(2) complex forms which resolves the HJ. Mg(2+) is required as a cofactor.

The protein localises to the cytoplasm. The catalysed reaction is Endonucleolytic cleavage at a junction such as a reciprocal single-stranded crossover between two homologous DNA duplexes (Holliday junction).. Its function is as follows. The RuvA-RuvB-RuvC complex processes Holliday junction (HJ) DNA during genetic recombination and DNA repair. Endonuclease that resolves HJ intermediates. Cleaves cruciform DNA by making single-stranded nicks across the HJ at symmetrical positions within the homologous arms, yielding a 5'-phosphate and a 3'-hydroxyl group; requires a central core of homology in the junction. The consensus cleavage sequence is 5'-(A/T)TT(C/G)-3'. Cleavage occurs on the 3'-side of the TT dinucleotide at the point of strand exchange. HJ branch migration catalyzed by RuvA-RuvB allows RuvC to scan DNA until it finds its consensus sequence, where it cleaves and resolves the cruciform DNA. This is Crossover junction endodeoxyribonuclease RuvC from Paramagnetospirillum magneticum (strain ATCC 700264 / AMB-1) (Magnetospirillum magneticum).